Reading from the N-terminus, the 421-residue chain is BEN domain-containing protein 5 (421 aa).

Lys-133 is modified (N6-acetyllysine). Residues 180–243 are a coiled coil; it reads RALYEELLRN…LNRRLQDVLL (64 aa). Lys-258 participates in a covalent cross-link: Glycyl lysine isopeptide (Lys-Gly) (interchain with G-Cter in SUMO2). One can recognise a BEN domain in the interval 302–408; the sequence is GSGIWVDEEK…EKIMDINKSC (107 aa).

Functionally, acts as a transcriptional repressor. The polypeptide is BEN domain-containing protein 5 (BEND5) (Homo sapiens (Human)).